A 118-amino-acid polypeptide reads, in one-letter code: Vesicle-associated membrane protein 1 (118 aa).

The segment covering 1 to 15 (MSAPAQPPAEGTEGA) has biased composition (low complexity). Residues 1–38 (MSAPAQPPAEGTEGAAPGGGPPGPPPNTTSNRRLQQTQ) are disordered. Residues 1–96 (MSAPAQPPAE…KRKYWWKNCK (96 aa)) lie on the Cytoplasmic side of the membrane. The span at 28-38 (TTSNRRLQQTQ) shows a compositional bias: polar residues. A v-SNARE coiled-coil homology domain is found at 33–93 (RLQQTQAQVE…AKLKRKYWWK (61 aa)). Ser63 is modified (phosphoserine). The chain crosses the membrane as a helical; Anchor for type IV membrane protein span at residues 97–116 (MMIMLGAICAIIVVVIVIYI). Over 117-118 (FT) the chain is Vesicular.

The protein belongs to the synaptobrevin family. In terms of assembly, interacts with VAPA and VAPB. (Microbial infection) Targeted and hydrolyzed by C.botulinum neurotoxin type D (BoNT/D, botD) which hydrolyzes the 61-Lys-|-Leu-62 bond and inhibits neurotransmitter release. This is a poor substrate for BoNT/D, high concentrations are required to cleave it in vitro. Post-translationally, (Microbial infection) Targeted and hydrolyzed by C.botulinum neurotoxin type F (BoNT/F, botF) which hydrolyzes the 60-Gln-|-Lys-61 bond and inhibits neurotransmitter release. In terms of tissue distribution, expressed in brain and spleen (at protein level). Isoform 1 expressed at very high level in brain. Even higher level found in spinal cord. Isoform 3 expressed in kidney, spleen and liver. Isoforms 2 and 3 expressed in osteoblasts of trabecular bone. Also expressed in heart.

The protein localises to the cytoplasmic vesicle. The protein resides in the secretory vesicle. Its subcellular location is the synaptic vesicle membrane. It is found in the synapse. It localises to the synaptosome. The protein localises to the cytoplasmic vesicle membrane. The protein resides in the mitochondrion outer membrane. In terms of biological role, involved in the targeting and/or fusion of transport vesicles to their target membrane. In Rattus norvegicus (Rat), this protein is Vesicle-associated membrane protein 1 (Vamp1).